Here is a 290-residue protein sequence, read N- to C-terminus: Lipoyl synthase (290 aa).

Positions 38, 43, 49, 64, 68, 71, and 277 each coordinate [4Fe-4S] cluster. Residues 50–266 (WSKGTATFLL…REIALDAGFR (217 aa)) form the Radical SAM core domain.

The protein belongs to the radical SAM superfamily. Lipoyl synthase family. [4Fe-4S] cluster serves as cofactor.

It is found in the cytoplasm. It catalyses the reaction [[Fe-S] cluster scaffold protein carrying a second [4Fe-4S](2+) cluster] + N(6)-octanoyl-L-lysyl-[protein] + 2 oxidized [2Fe-2S]-[ferredoxin] + 2 S-adenosyl-L-methionine + 4 H(+) = [[Fe-S] cluster scaffold protein] + N(6)-[(R)-dihydrolipoyl]-L-lysyl-[protein] + 4 Fe(3+) + 2 hydrogen sulfide + 2 5'-deoxyadenosine + 2 L-methionine + 2 reduced [2Fe-2S]-[ferredoxin]. Its pathway is protein modification; protein lipoylation via endogenous pathway; protein N(6)-(lipoyl)lysine from octanoyl-[acyl-carrier-protein]: step 2/2. Catalyzes the radical-mediated insertion of two sulfur atoms into the C-6 and C-8 positions of the octanoyl moiety bound to the lipoyl domains of lipoate-dependent enzymes, thereby converting the octanoylated domains into lipoylated derivatives. This Chlorobaculum tepidum (strain ATCC 49652 / DSM 12025 / NBRC 103806 / TLS) (Chlorobium tepidum) protein is Lipoyl synthase.